Reading from the N-terminus, the 321-residue chain is Glucokinase (321 aa).

8–13 (GDVGGT) serves as a coordination point for ATP.

The protein belongs to the bacterial glucokinase family.

The protein resides in the cytoplasm. It carries out the reaction D-glucose + ATP = D-glucose 6-phosphate + ADP + H(+). The protein is Glucokinase of Psychromonas ingrahamii (strain DSM 17664 / CCUG 51855 / 37).